Here is a 77-residue protein sequence, read N- to C-terminus: ATP synthase subunit c (77 aa).

2 helical membrane passes run 7–27 and 57–77; these read AFKY…AALG and VGLI…ILFL.

Belongs to the ATPase C chain family. As to quaternary structure, F-type ATPases have 2 components, F(1) - the catalytic core - and F(0) - the membrane proton channel. F(1) has five subunits: alpha(3), beta(3), gamma(1), delta(1), epsilon(1). F(0) has three main subunits: a(1), b(2) and c(10-14). The alpha and beta chains form an alternating ring which encloses part of the gamma chain. F(1) is attached to F(0) by a central stalk formed by the gamma and epsilon chains, while a peripheral stalk is formed by the delta and b chains.

It localises to the cell membrane. Its function is as follows. F(1)F(0) ATP synthase produces ATP from ADP in the presence of a proton or sodium gradient. F-type ATPases consist of two structural domains, F(1) containing the extramembraneous catalytic core and F(0) containing the membrane proton channel, linked together by a central stalk and a peripheral stalk. During catalysis, ATP synthesis in the catalytic domain of F(1) is coupled via a rotary mechanism of the central stalk subunits to proton translocation. In terms of biological role, key component of the F(0) channel; it plays a direct role in translocation across the membrane. A homomeric c-ring of between 10-14 subunits forms the central stalk rotor element with the F(1) delta and epsilon subunits. The protein is ATP synthase subunit c of Lactobacillus helveticus (strain DPC 4571).